Consider the following 230-residue polypeptide: Intracellular hyphae protein 1 (230 aa).

The signal sequence occupies residues 1–18 (MQTSFVALLAVAASLASA). Residues 20 to 102 (PHGGNSYEAS…KNNTLPVPTC (83 aa)) are disordered. Repeat copies occupy residues 30-33 (LPEP), 36-39 (LPEP), 42-45 (LPEP), 46-49 (VEGP), 50-53 (YKPK), 57-60 (LPEP), 65-68 (YKPK), 76-79 (VEGP), 80-83 (YKPK), and 84-87 (LPEP). The interval 30-87 (LPEPTNLPEPTKLPEPVEGPYKPKPPILPEPIKDNYKPKTPILPEHVEGPYKPKLPEP) is 5 X 4 AA repeats of L-P-E-P. The interval 46 to 87 (VEGPYKPKPPILPEPIKDNYKPKTPILPEHVEGPYKPKLPEP) is 2 X 4 AA repeats of V-E-G-P. Positions 50-83 (YKPKPPILPEPIKDNYKPKTPILPEHVEGPYKPK) are 3 X 4 AA repeats of Y-K-P-K. The span at 74 to 84 (EHVEGPYKPKL) shows a compositional bias: basic and acidic residues. The N-linked (GlcNAc...) asparagine glycan is linked to Asn-94. The region spanning 108–152 (KTHKVKSGESLTTIAEKYDTGICNIAKLNNLADPNFVDLNQDLQI) is the LysM 1 domain. Asn-161 is a glycosylation site (N-linked (GlcNAc...) asparagine). The region spanning 183–227 (DIYSVVSGDTLTSIAQALQITLQSLKDANPGVVPEHLNVGQKLNV) is the LysM 2 domain.

As to quaternary structure, forms a multimeric structure. In terms of processing, N-glycosylated and may be O-glycosylated. In terms of tissue distribution, expressed in penetration hyphae, infection vesicles and primary hyphae (intracellular hyphae).

The protein localises to the secreted. Its subcellular location is the cell wall. In terms of biological role, may have roles in host-pathogen interaction, including establishment and maintenance of biotrophy, prevention of host recognition of the fungus and a barrier to host defense molecules. The polypeptide is Intracellular hyphae protein 1 (CIH1) (Colletotrichum lindemuthianum (Bean anthracnose fungus)).